The chain runs to 222 residues: Tegument protein UL26 (222 aa).

The protein belongs to the herpesviridae US22 family. As to quaternary structure, interacts with UL25. Interacts with ISGylation machinery components ISG15, UBA7 and HERC5; these interactions inhibit global protein ISGylation. In terms of processing, ISGylated; ISGylation regulates UL26 stability and inhibits its activities to suppress NF-kappa-B signaling.

It is found in the virion tegument. It localises to the host nucleus. Functionally, plays a role in the inhibition of host NF-kappa-B. This inhibition affects both the canonical and the non-canonical pathways. Blocks the induction of host IKK phosphorylation. May also influence the normal phosphorylation state of several tegument proteins including pp28 in virions. Also suppresses virus-induced ISGylation independent of its own ISGylation. This is Tegument protein UL26 (UL26) from Homo sapiens (Human).